The following is a 258-amino-acid chain: Glucanase inhibitor protein 3 (258 aa).

Residues 1-19 (MKIISAVAASSIALGAVSA) form the signal peptide. The 228-residue stretch at 29–256 (VLGGAVVPSG…ALEWINSITK (228 aa)) folds into the Peptidase S1 domain. Residues Cys-56 and Cys-72 are joined by a disulfide bond. N-linked (GlcNAc...) asparagine glycans are attached at residues Asn-90, Asn-105, and Asn-110. 2 disulfide bridges follow: Cys-180-Cys-192 and Cys-202-Cys-233.

The protein belongs to the peptidase S1 family. In terms of assembly, forms an apoplastic complex with host endoglucanases in tomato leaves during P.infestans infection.

Its subcellular location is the secreted. Functionally, secreted effector that suppresses host plant glucan elicitor-mediated defense responses. Targets host endoglucanases and inhibits the endoglucanase-mediated release of elicitor-active glucan oligosaccharides from P.infestans cell walls. The sequence is that of Glucanase inhibitor protein 3 from Phytophthora infestans (Potato late blight agent).